Reading from the N-terminus, the 123-residue chain is Protein Wnt-3a (123 aa).

Residue S1 is the site of O-palmitoleoyl serine attachment. C89 and C104 form a disulfide bridge. N-linked (GlcNAc...) asparagine glycosylation is present at N90.

The protein belongs to the Wnt family. Post-translationally, disulfide bonds have critical and distinct roles in secretion and activity. Loss of each conserved cysteine results in high molecular weight oxidized Wnt oligomers, which are formed through inter-Wnt disulfide bonding. Palmitoleoylation is required for efficient binding to frizzled receptors. Depalmitoleoylation leads to Wnt signaling pathway inhibition.

It is found in the secreted. The protein localises to the extracellular space. Its subcellular location is the extracellular matrix. Functionally, ligand for members of the frizzled family of seven transmembrane receptors. Functions in the canonical Wnt signaling pathway that results in activation of transcription factors of the TCF/LEF family. Required for normal embryonic mesoderm development and formation of caudal somites. Required for normal morphogenesis of the developing neural tube. The protein is Protein Wnt-3a (WNT3A) of Meleagris gallopavo (Wild turkey).